A 152-amino-acid polypeptide reads, in one-letter code: MSTINTDTNDTMPHISVHAQYIKDLSLENPSAPSSLAALDQRPQIDLSLDINVTNLSEENFYEVELNIEAIARNEKYKLFQIELKYAGVFNLINIDSEQHPILLSVHCPAMIFPFARKIIASCTQDAGFQPLMIDPIDFGALYHKKMSEHQN.

Belongs to the SecB family. Homotetramer, a dimer of dimers. One homotetramer interacts with 1 SecA dimer.

It localises to the cytoplasm. In terms of biological role, one of the proteins required for the normal export of preproteins out of the cell cytoplasm. It is a molecular chaperone that binds to a subset of precursor proteins, maintaining them in a translocation-competent state. It also specifically binds to its receptor SecA. The sequence is that of Protein-export protein SecB from Rickettsia massiliae (strain Mtu5).